The primary structure comprises 161 residues: Ribosome maturation factor RimP (161 aa).

It belongs to the RimP family.

The protein resides in the cytoplasm. Functionally, required for maturation of 30S ribosomal subunits. This is Ribosome maturation factor RimP from Pelobacter propionicus (strain DSM 2379 / NBRC 103807 / OttBd1).